A 328-amino-acid polypeptide reads, in one-letter code: V-set and immunoglobulin domain-containing protein 2 (328 aa).

The N-terminal stretch at 1–24 is a signal peptide; the sequence is MAWPLVGAFLCGHLLGFVCLSGLA. Positions 25–138 constitute an Ig-like V-type domain; sequence VEVTVPTEPL…DFYTNGLGLI (114 aa). Residues 25-244 lie on the Extracellular side of the membrane; that stretch reads VEVTVPTEPL…VTDSSEGRVA (220 aa). Cysteine 46 and cysteine 122 are oxidised to a cystine. Asparagine 139, asparagine 207, and asparagine 232 each carry an N-linked (GlcNAc...) asparagine glycan. Positions 145 to 234 constitute an Ig-like C2-type domain; it reads PPSHPLCSQS…GSASCELNLS (90 aa). A disulfide bridge links cysteine 167 with cysteine 218. Residues 245-265 form a helical membrane-spanning segment; that stretch reads GTLIGVLLGVLLLSVAAFCLI. The Cytoplasmic portion of the chain corresponds to 266 to 328; the sequence is RFQKERKKEP…TTKSKLSMVV (63 aa).

In terms of tissue distribution, expressed in the stomach, colon and prostate.

The protein resides in the membrane. The protein is V-set and immunoglobulin domain-containing protein 2 (Vsig2) of Mus musculus (Mouse).